The primary structure comprises 60 residues: MAVQQNKKSRSARDMRRSHDALESNALSVEKSTGEVHLRHHVSPDGFYRGRKVVDKGSDE.

Residues 1–60 (MAVQQNKKSRSARDMRRSHDALESNALSVEKSTGEVHLRHHVSPDGFYRGRKVVDKGSDE) form a disordered region. Positions 11 to 22 (SARDMRRSHDAL) are enriched in basic and acidic residues.

This sequence belongs to the bacterial ribosomal protein bL32 family.

The chain is Large ribosomal subunit protein bL32 from Pseudomonas aeruginosa (strain LESB58).